Consider the following 361-residue polypeptide: Sensor protein VanSC (361 aa).

The next 2 membrane-spanning stretches (helical) occupy residues 16-36 and 59-79; these read FVTT…IRFI and WLFC…IYYM. One can recognise a Histidine kinase domain in the interval 144 to 359; the sequence is YLAHDLRTPL…IFNVRLPKPA (216 aa). The residue at position 147 (His147) is a Phosphohistidine; by autocatalysis. Glu252 provides a ligand contact to Mg(2+).

In terms of processing, autophosphorylated.

The protein localises to the membrane. The enzyme catalyses ATP + protein L-histidine = ADP + protein N-phospho-L-histidine.. This chain is Sensor protein VanSC, found in Enterococcus gallinarum.